A 597-amino-acid polypeptide reads, in one-letter code: HECT-type ubiquitin ligase-interacting protein creD (597 aa).

3 disordered regions span residues 375-398, 439-492, and 576-597; these read EVDPSGYRTPGPGSGPGTPFGTLS, ASEH…MATP, and SRSHSHSDDERRIRLTQARGRA. Residues 452 to 466 are compositionally biased toward polar residues; it reads GPPSGSNTHGSNTHA. Over residues 472–483 the composition is skewed to basic and acidic residues; that stretch reads LSRRASDEDVHD.

This sequence belongs to the arrestin family. As to quaternary structure, interacts with hulA.

Functionally, component of the regulatory network controlling carbon source utilization through ubiquitination and deubiquitination involving creA, creB, creC, creD and acrB. May be involved in signaling by recognizing appropriately phosphorylated substrates via its arrestin domains and then recruit a HECT-type ubiquitin ligase such as hulA, leading to ubiquitination of the substrate, providing a link between ubiquitination and phosphorylation in protein regulation and stability. This Emericella nidulans (strain FGSC A4 / ATCC 38163 / CBS 112.46 / NRRL 194 / M139) (Aspergillus nidulans) protein is HECT-type ubiquitin ligase-interacting protein creD (creD).